The following is a 113-amino-acid chain: Large ribosomal subunit protein bL17 (113 aa).

This sequence belongs to the bacterial ribosomal protein bL17 family. As to quaternary structure, part of the 50S ribosomal subunit. Contacts protein L32.

In Clostridium botulinum (strain ATCC 19397 / Type A), this protein is Large ribosomal subunit protein bL17.